A 732-amino-acid polypeptide reads, in one-letter code: Guanylate cyclase soluble subunit alpha-2 (732 aa).

The disordered stretch occupies residues 1-58; the sequence is MSRRKISSESFSSLGSDYLETSPEEEGECPLSRLCWNGSRSPPGPLEPSPAAAAAAAA. A compositionally biased stretch (low complexity) spans 49-58; sequence SPAAAAAAAA. In terms of domain architecture, Guanylate cyclase spans 521 to 648; the sequence is TMLFSDIVGF…NNVTLASKFE (128 aa).

It belongs to the adenylyl cyclase class-4/guanylyl cyclase family. As to quaternary structure, heterodimer of an alpha and a beta chain. In terms of tissue distribution, isoform 1 is expressed in fetal brain, liver, colon, endothelium and testis. Isoform 2 is expressed only in liver, colon and endothelium.

The protein resides in the cytoplasm. It carries out the reaction GTP = 3',5'-cyclic GMP + diphosphate. With respect to regulation, activated by nitric oxide in the presence of magnesium or manganese ions. In terms of biological role, has guanylyl cyclase on binding to the beta-1 subunit. Isoform 2 acts as a negative regulator of guanylyl cyclase activity as it forms non-functional heterodimers with the beta subunits. In Homo sapiens (Human), this protein is Guanylate cyclase soluble subunit alpha-2 (GUCY1A2).